The primary structure comprises 61 residues: Large ribosomal subunit protein bL32 (61 aa).

The segment at 1-20 (MAVQKSKPSRAKRGKRRSHD) is disordered. The span at 7–19 (KPSRAKRGKRRSH) shows a compositional bias: basic residues.

Belongs to the bacterial ribosomal protein bL32 family.

The polypeptide is Large ribosomal subunit protein bL32 (Buchnera aphidicola subsp. Cinara cedri (strain Cc)).